Here is a 758-residue protein sequence, read N- to C-terminus: 5-methyltetrahydropteroyltriglutamate--homocysteine methyltransferase (758 aa).

Residues 16 to 19 and Lys112 contribute to the 5-methyltetrahydropteroyltri-L-glutamate site; that span reads RELK. L-homocysteine is bound by residues 433 to 435 and Glu486; that span reads IGS. L-methionine is bound by residues 433 to 435 and Glu486; that span reads IGS. 5-methyltetrahydropteroyltri-L-glutamate is bound by residues 517–518 and Trp563; that span reads RC. Residue Asp601 participates in L-homocysteine binding. Asp601 contributes to the L-methionine binding site. Residue Glu607 coordinates 5-methyltetrahydropteroyltri-L-glutamate. Zn(2+) contacts are provided by His643, Cys645, and Glu667. Catalysis depends on His696, which acts as the Proton donor. Cys728 serves as a coordination point for Zn(2+).

It belongs to the vitamin-B12 independent methionine synthase family. Zn(2+) serves as cofactor.

The catalysed reaction is 5-methyltetrahydropteroyltri-L-glutamate + L-homocysteine = tetrahydropteroyltri-L-glutamate + L-methionine. The protein operates within amino-acid biosynthesis; L-methionine biosynthesis via de novo pathway; L-methionine from L-homocysteine (MetE route): step 1/1. Functionally, catalyzes the transfer of a methyl group from 5-methyltetrahydrofolate to homocysteine resulting in methionine formation. This is 5-methyltetrahydropteroyltriglutamate--homocysteine methyltransferase from Neisseria meningitidis serogroup B (strain ATCC BAA-335 / MC58).